We begin with the raw amino-acid sequence, 1404 residues long: MDGGGGETYGCGGGRREGGWAWAAAAADSVFSRSSSSAREDDEEDLRWAALEKLPTYDRARTALLALPPDGELREVNVRRLAADEQRALLERVAGVADDHAGFLCMFKERLDRVGIKLPTIEVRYENLNVEAESYVGSRGFPTIFNTYANIFEGLGNALHITRKKKQKISILHNVSGIVKPHRMTLLLGPPGSGKTSLLMALAGTLPSTVKVSGTITYNGHTMDEFVPQRSAAYVSQHDLHMAELTVRETVSFSAKCQGVGHHYDMLMELLRREKEENIKPDPEIDLYLKQKAEVVTNHILKILGLDICADTIVGNNMVRGISGGQKKRLTTAEMLVTPGRALFMDEILTGLDSSTTFQIVNSIRQTVHILGGTTIIALLQPAPETYELFDEIIILSDGQVVYNGPRDHVLEFFQSIGFKCPERKGVADFLQEVTSRKDQKQYWTHGDSTYRYISAAEIAEAFQSFHVGQAVRTELVVPFGKGKSHPAALRTSKYGVSMKELLQANIDREILLMKRNSFLYIFQAIRLTVMAINTMTVFMRTNMHRDSIENGRIYMGAQFYGMLMIMFNGLAEMGLAIAKLPVFFKQRDLFFYPAWTYSLPSWILKTPISFLNTIVWVFLTYYVIGFDPNIERFFRQFLALFVMSEATSGLFRFIASLTRDPVVASTMGSSCILISMLSSGFILSREEIKKWWIWGYWISPLMYALNTLAVNEFLGNSWNKTISGFSEPLGRLVLESRGFFPEAKWYWIGVGALLGYVILLNVLYTICLIFLTCTVDVNNDEATSNHMIGNSSSGIKGMVLPFVPLSITFEDIKYSIDMPEALKTQATESRLELLKDISGSFRPGVLTALMGVSGAGKTTLLDVLAGRKTSGYIEGNITISGYPKKQETFARVSGYCEQNDIHSPNVTIYESLMFSAWLRLPTKIDSATRKMIIEEVMELVELYPLKDALVGLPGVSGLSIEQRKRLTIAVELVANPSIIFLDEPTSGLDARAAAIVMRAIRNTVDTGRTVVCTIHQPSIDIFESFDELFLMKRGGEEIYVGPLGQHSCELIRYFEAIEGVSKIKHGYNPSTWMLEVTSPMQEQKTGVNFTQVYKNSELYRRNKNLIKELSTPHESSSDLSFPTQYSQPFLTQCLACLWKQRLSYWRNPRYIAVKYFFTIIVALLFGTMFWGIGQKRNNKQALFSAMGSMYSTCLTMGVQNSASVQPIVSIERTVFYRERASHMYSPLPYALGQVAIELPYIFLQTIIYGMLVYAMIGYEWSGAKFFWYLFFMYFTLSYYTFYGMMAVGLTPNYNMSTVVSTGFYTMWNLFSGFLIPLTRIPIWWRWYYWICPVAWTLNGLVTSQFGDVSDKFDDGERVSDFVKNYFGFHHELLWVPAMVVVSFAVLFAFLFGLSLRLFNFQKR.

Residues 156–423 (GNALHITRKK…FQSIGFKCPE (268 aa)) enclose the ABC transporter 1 domain. 189–196 (GPPGSGKT) is an ATP binding site. The ABC transmembrane type-2 1 domain occupies 501-714 (ELLQANIDRE…ALNTLAVNEF (214 aa)). 7 consecutive transmembrane segments (helical) span residues 519–539 (FLYIFQAIRLTVMAINTMTVF), 565–585 (MIMFNGLAEMGLAIAKLPVFF), 607–627 (TPISFLNTIVWVFLTYYVIGF), 638–658 (FLALFVMSEATSGLFRFIASL), 663–683 (VVASTMGSSCILISMLSSGFI), 692–712 (WWIWGYWISPLMYALNTLAVN), and 751–771 (VGALLGYVILLNVLYTICLIF). The ABC transporter 2 domain occupies 808-1059 (ITFEDIKYSI…ELIRYFEAIE (252 aa)). 852-859 (GVSGAGKT) contacts ATP. An ABC transmembrane type-2 2 domain is found at 1132–1346 (TQCLACLWKQ…TLNGLVTSQF (215 aa)). Helical transmembrane passes span 1152–1172 (IAVKYFFTIIVALLFGTMFWG), 1183–1199 (LFSAMGSMYSTCLTMGV), 1239–1259 (LPYIFLQTIIYGMLVYAMIGY), 1266–1286 (FFWYLFFMYFTLSYYTFYGMM), 1298–1318 (TVVSTGFYTMWNLFSGFLIPL), 1321–1341 (IPIWWRWYYWICPVAWTLNGL), and 1373–1393 (LLWVPAMVVVSFAVLFAFLFG).

Belongs to the ABC transporter superfamily. ABCG family. PDR (TC 3.A.1.205) subfamily.

It is found in the membrane. Functionally, may be a general defense protein. This Oryza sativa subsp. japonica (Rice) protein is ABC transporter G family member 47.